The following is a 349-amino-acid chain: 2-oxoglutarate-Fe(II) type oxidoreductase ppzD (349 aa).

Residues 200-311 (NTSELRLNHY…RYSVAYFGKP (112 aa)) enclose the Fe2OG dioxygenase domain. His227, Asp229, and His287 together coordinate Fe cation. Residue Arg302 participates in 2-oxoglutarate binding.

It belongs to the iron/ascorbate-dependent oxidoreductase family. Requires Fe(2+) as cofactor.

The catalysed reaction is L-proline + 2-oxoglutarate + O2 = trans-4-hydroxy-L-proline + succinate + CO2. The enzyme catalyses L-proline + 2-oxoglutarate + O2 = trans-3-hydroxy-L-proline + succinate + CO2. It carries out the reaction D-proline + 2-oxoglutarate + O2 = cis-4-hydroxy-D-proline + succinate + CO2. Its pathway is secondary metabolite biosynthesis. Its function is as follows. 2-oxoglutarate-Fe(II) type oxidoreductase; part of the gene cluster that mediates the biosynthesis of pyrrolopyrazines, secondary metabolites showing insecticidal activity. Within the pathway, ppzD converts L-proline into trans-4-hydroxy-L-proline as a major product, yielding a key precursor for peramine biosynthesis. PpzD is also able to convert L-proline into trans-3-hydroxy-L-proline. The single multifunctional NRPS ppzA is sufficient to produce peramine via condensation of 1-pyrroline-5-carboxylate and arginine, N-methylation of the alpha-amino group of arginine and reduction of the thioester and the cyclization to form an iminium ion resulting in release from the peptide synthetase. Deprotonation of this intermediate and oxidation of the pyrroline ring would give rise to peramine. In Epichloe species that produce only peramine, the peramine synthetase gene is not localized in a gene cluster, in contrast to Metarhizium species that contain additional pyrrolopyrazine biosynthesis genes. The 2-oxoglutarate-Fe(II) type oxidoreductase ppzC hydroxylates peramine to yield the newly identified compound 8-hydroxyperamine whereas ppzD converts L-proline into trans-4-hydroxy-L-proline, a precursor of peramine biosynthesis. In Metarhizium majus (strain ARSEF 297), this protein is 2-oxoglutarate-Fe(II) type oxidoreductase ppzD (ppzD).